A 396-amino-acid polypeptide reads, in one-letter code: S-adenosylmethionine synthase (396 aa).

Residue histidine 16 coordinates ATP. Aspartate 18 provides a ligand contact to Mg(2+). Glutamate 44 provides a ligand contact to K(+). Positions 57 and 100 each coordinate L-methionine. Residues 100–110 (QSVDINQGVDR) are flexible loop. Residues 165–167 (DAK), aspartate 240, 246–247 (RK), alanine 263, and lysine 267 each bind ATP. Residue aspartate 240 participates in L-methionine binding. Lysine 271 contributes to the L-methionine binding site.

Belongs to the AdoMet synthase family. Homotetramer; dimer of dimers. Mg(2+) is required as a cofactor. The cofactor is K(+).

It localises to the cytoplasm. It carries out the reaction L-methionine + ATP + H2O = S-adenosyl-L-methionine + phosphate + diphosphate. It participates in amino-acid biosynthesis; S-adenosyl-L-methionine biosynthesis; S-adenosyl-L-methionine from L-methionine: step 1/1. Its function is as follows. Catalyzes the formation of S-adenosylmethionine (AdoMet) from methionine and ATP. The overall synthetic reaction is composed of two sequential steps, AdoMet formation and the subsequent tripolyphosphate hydrolysis which occurs prior to release of AdoMet from the enzyme. The chain is S-adenosylmethionine synthase from Pseudomonas aeruginosa (strain UCBPP-PA14).